The sequence spans 1579 residues: MNSQPQARSPFFQRPQIQPPRAAIPNSSPSIRPGVQTPTAVYQANQHIMMVNHLPMPYPVTQGHQYCIPQYRHSGPPYVGPPQQYPVQPPGPGPFYPGPGPGDFANAYGTPFYPSQPVYQSAPIIVPTQQQPPPAKREKKTIRIRDPNQGGKDITEEIMSGGGSRNPTPPIGRPASTPTPPQQLPSQVPEHSPVVYGTVESAHLAASTPVTAASDQKQEEKPKPDPVFQSPSTVLRLVLSGEKKEQAGQMPETAAGEPTPEPPRTSSPTSLPPLARSSLPSPMSAALSSQPLFTAEDKCELPSSKEEDAPPVPSPTSCTAASGPSLTDNSDICKKPCSVAPHDSQLISSTILINEMNGVGEKLSAKENTVGMLRQEVLPLTLELEILEHPQEELKVECTPTPIAPSMLPAFSPAPPTPPTSPPCPPVVLSAAIARSPAVATEVQRVADEGESLRTCLSKDAKEMQDKAESESDGQAEETADPQSLHSGRSPAPVQTATTAPKSWKKTKEQTRTPDEVLEAEAEPKAEEELAVDSVLEPEQEKMSQGFPSERDPSALKRGKAEEGNGEEAEPVRNGAESASEGEGGDGNSGSADSSADGLTFPFKAESWKPADTEGKKQYDREFLLDIQFMPACIQKPEGLPPISDVVLDKINQPRLSMRTLDPRILPRGPDFTPAFADFPRQTPGGRGVPLLNVGPRRSQPGQRREPRKIITVSVKEDVHLRKAENAWKPSQKRDSHADDPESIKTQELFRKVRSILNKLTPQMFNQLMKQVSALTVDTEERLKGVIDLVFEKAIDEPSFSVAYANMCRCLVTLKVPMADKPGNTVNFRKLLLNRCQKEFEKDKADDDVFEKKQKELEAASAPEERTRLHDELEEAKDKARRRSIGNIKFIGELFKLKMLTEAIMHDCVVKLLKNHDEESLECLCRLLTTIGKDLDFEKAKPRMDQYFNQMEKIVKERKTSSRIRFMLQDVIDLRLCNWVSRRADQGPKTIEQIHKEAKIEEQEEQRKVQQLMTKEKRRPGVQRVDEGGWNTVQGAKNSRVLDPSKFLKITKPTIDEKIQLVPKAQLGSWGKGSSGGAKASESDALRSSASSLNRFSPLQPPAPSGSPSATPLEFDSRRALTSRGSMGREKSDKPIPAGTARPNTFLRGSSKDLLDNQSQEEQRREMLETVKQLTGGLDAERASTEADRSKTRELAKSEMCAVPAPDKPALSEEEVERKSKSIIDEFLHINDFKEATQCIEELSAQGPLHVFVKVGVEFTLERSQITRDHMGHLLYQLVQSEKLSKQDFFKGFSETLELADDMAIDIPHIWLYLAELVTPMLKEGGISMRELIVEFSKPLLPVGRAGVLLSEILHLLCRQMSHKKVGALWREADLSWKDFLPEGEDVHHFLLEQKLDFTESEGPCSSEALSKKELSAEELSQRLEKLIMEEKADDERIFDWVEANLDESQMSSPTFLRALMTAVCKAAIIADCSTFRVDTAVIKQRVPILLKYLDSDTEKELQALYALQASIVKLDQPANLLRMFFDCLYDEEVISEDAFYKWESSKDPAEQAGKGVALKSVTAFFTWLREAEEESEDN.

Disordered stretches follow at residues 1-35 and 128-326; these read MNSQ…RPGV and TQQQ…GPSL. Positions 10–25 are enriched in low complexity; the sequence is PFFQRPQIQPPRAAIP. The segment covering 26 to 35 has biased composition (polar residues); sequence NSSPSIRPGV. Positions 134–162 are PABPC1-binding; the sequence is PAKREKKTIRIRDPNQGGKDITEEIMSGG. A compositionally biased stretch (pro residues) spans 167 to 183; that stretch reads PTPPIGRPASTPTPPQQ. Thr-168 bears the Phosphothreonine mark. Residues Ser-230, Ser-232, and Ser-267 each carry the phosphoserine modification. Positions 266–292 are enriched in low complexity; that stretch reads SSPTSLPPLARSSLPSPMSAALSSQPL. Residues 295-308 show a composition bias toward basic and acidic residues; that stretch reads AEDKCELPSSKEED. Polar residues predominate over residues 315–326; it reads PTSCTAASGPSL. A phosphoserine mark is found at Ser-436, Ser-470, Ser-472, and Ser-490. Residues 454–470 show a composition bias toward basic and acidic residues; that stretch reads RTCLSKDAKEMQDKAES. Disordered regions lie at residues 454–615, 681–706, and 724–744; these read RTCL…DTEG, RQTP…QRRE, and AENA…PESI. The segment covering 471–480 has biased composition (acidic residues); it reads ESDGQAEETA. A compositionally biased stretch (polar residues) spans 481-501; the sequence is DPQSLHSGRSPAPVQTATTAP. Composition is skewed to basic and acidic residues over residues 506 to 515 and 549 to 563; these read KTKEQTRTPD and SERD…KAEE. Residues 589–598 are compositionally biased toward low complexity; that stretch reads SGSADSSADG. Residues 606–615 are compositionally biased toward basic and acidic residues; the sequence is ESWKPADTEG. Positions 614 to 625 are EIF4E-binding; that stretch reads EGKKQYDREFLL. Residues 694 to 1014 are eIF3/EIF4A-binding; sequence VGPRRSQPGQ…EQRKVQQLMT (321 aa). HEAT repeat units follow at residues 740-778, 779-826, 827-900, 901-939, and 940-979; these read DPES…LTVD, TEER…GNTV, NFRK…LKML, TEAI…DFEK, and AKPR…LCNW. One can recognise an MIF4G domain in the interval 750 to 978; sequence FRKVRSILNK…QDVIDLRLCN (229 aa). Residues 855 to 871 are compositionally biased toward basic and acidic residues; that stretch reads KELEAASAPEERTRLHD. A disordered region spans residues 855–875; that stretch reads KELEAASAPEERTRLHDELEE. Residues 989 to 1018 are a coiled coil; sequence KTIEQIHKEAKIEEQEEQRKVQQLMTKEKR. Disordered stretches follow at residues 1009 to 1037 and 1067 to 1214; these read VQQL…QGAK and LGSW…LSEE. Positions 1086–1098 are enriched in low complexity; the sequence is LRSSASSLNRFSP. Ser-1150 is subject to Phosphoserine; by CaMK1. Composition is skewed to basic and acidic residues over residues 1150–1169 and 1179–1197; these read SSKD…EMLE and DAER…ELAK. The stretch at 1154–1176 forms a coiled coil; sequence LLDNQSQEEQRREMLETVKQLTG. Ser-1212 is modified (phosphoserine). Residues 1215–1337 form the MI domain; it reads EVERKSKSII…SMRELIVEFS (123 aa). The stretch at 1406 to 1438 forms a coiled coil; that stretch reads SSEALSKKELSAEELSQRLEKLIMEEKADDERI. The W2 domain maps to 1410–1579; the sequence is LSKKELSAEE…REAEEESEDN (170 aa). The interval 1427-1579 is EIF4A-binding; it reads LIMEEKADDE…REAEEESEDN (153 aa). The interval 1565 to 1579 is necessary but not sufficient for MKNK1-binding; sequence FFTWLREAEEESEDN.

It belongs to the eukaryotic initiation factor 4G family. Interacts with EIF4A, EIF4E, eIF3 and PABPC1. Part of a complex with EIF4E. eIF4F is a multi-subunit complex, the composition of which varies with external and internal environmental conditions. It is composed of at least EIF4A, EIF4E and EIF4G1/EIF4G3. EIF4G1/EIF4G3 interacts through its C-terminus with the serine/threonine kinases MKNK1, and with MKNK2. Appears to act as a scaffold protein, holding these enzymes in place to phosphorylate eIF4E. Non-phosphorylated EIF4EBP1 competes with EIF4G1/EIFG3 to interact with EIF4E; insulin stimulated MAP-kinase (MAPK1 and MAPK3) phosphorylation of EIF4EBP1 causes dissociation of the complex allowing EIF4G1/EIF4G3 to bind and consequent initiation of translation. EIF4G1/EIF4G3 interacts with PABPC1 to bring about circularization of the mRNA. Interacts with FXR1; promoting translation of FXR1 target mRNAs.

In terms of biological role, component of the protein complex eIF4F, which is involved in the recognition of the mRNA cap, ATP-dependent unwinding of 5'-terminal secondary structure and recruitment of mRNA to the ribosome. Functional homolog of EIF4G1. The protein is Eukaryotic translation initiation factor 4 gamma 3 (Eif4g3) of Mus musculus (Mouse).